Here is a 210-residue protein sequence, read N- to C-terminus: Na(+)-translocating NADH-quinone reductase subunit D (210 aa).

6 helical membrane-spanning segments follow: residues 14 to 34 (PIIS…ALAV), 42 to 62 (LVMT…ISMI), 72 to 92 (IIVQ…VLQA), 103 to 123 (VFVG…AYAM), 131 to 151 (FMDG…VGFV), and 178 to 198 (NGLL…IWII).

This sequence belongs to the NqrDE/RnfAE family. Composed of six subunits; NqrA, NqrB, NqrC, NqrD, NqrE and NqrF.

The protein localises to the cell inner membrane. It carries out the reaction a ubiquinone + n Na(+)(in) + NADH + H(+) = a ubiquinol + n Na(+)(out) + NAD(+). In terms of biological role, NQR complex catalyzes the reduction of ubiquinone-1 to ubiquinol by two successive reactions, coupled with the transport of Na(+) ions from the cytoplasm to the periplasm. NqrA to NqrE are probably involved in the second step, the conversion of ubisemiquinone to ubiquinol. This is Na(+)-translocating NADH-quinone reductase subunit D from Shewanella loihica (strain ATCC BAA-1088 / PV-4).